Here is a 159-residue protein sequence, read N- to C-terminus: Endoribonuclease YbeY (159 aa).

Zn(2+)-binding residues include His117, His121, and His127.

The protein belongs to the endoribonuclease YbeY family. Requires Zn(2+) as cofactor.

The protein resides in the cytoplasm. Its function is as follows. Single strand-specific metallo-endoribonuclease involved in late-stage 70S ribosome quality control and in maturation of the 3' terminus of the 16S rRNA. In Azorhizobium caulinodans (strain ATCC 43989 / DSM 5975 / JCM 20966 / LMG 6465 / NBRC 14845 / NCIMB 13405 / ORS 571), this protein is Endoribonuclease YbeY.